Reading from the N-terminus, the 559-residue chain is CCR4-NOT transcription complex subunit 6-like (559 aa).

Residues 1-148 are required for interaction with cnot1, cnot3 and cnot7; the sequence is MPKEKYDPPD…LYQEPDGTRK (148 aa). Positions 1-550 are nuclease domain; sequence MPKEKYDPPD…NGLHLPVHST (550 aa). 4 LRR repeats span residues 52–73, 75–96, 98–120, and 121–143; these read HLTA…IAKL, HLVY…LGNM, TLRE…GRLF, and QLQT…YQEP. Glu-235 serves as a coordination point for Mg(2+). The substrate site is built by Glu-235, Glu-271, His-353, and Pro-358. A Mg(2+)-binding site is contributed by Asp-405. The Proton donor/acceptor role is filled by Asp-405. Residues Asn-407, Asn-474, and Phe-479 each coordinate substrate.

The protein belongs to the CCR4/nocturin family. In terms of assembly, component of the CCR4-NOT complex. It depends on Mg(2+) as a cofactor.

The protein localises to the cytoplasm. The protein resides in the nucleus. It carries out the reaction Exonucleolytic cleavage of poly(A) to 5'-AMP.. In terms of biological role, poly(A) nuclease with 3'-5' RNase activity. Catalytic component of the CCR4-NOT complex which is one of the major cellular mRNA deadenylases and is linked to various cellular processes including bulk mRNA degradation, miRNA-mediated repression, translational repression during translational initiation and general transcription regulation. Additional complex functions may be a consequence of its influence on mRNA expression. The chain is CCR4-NOT transcription complex subunit 6-like (cnot6l) from Danio rerio (Zebrafish).